The chain runs to 75 residues: Acylphosphatase-like protein MJ1405 (75 aa).

The region spanning 8–75 (TYEIIIYGRI…TNFWRVRKCK (68 aa)) is the Acylphosphatase-like domain.

This Methanocaldococcus jannaschii (strain ATCC 43067 / DSM 2661 / JAL-1 / JCM 10045 / NBRC 100440) (Methanococcus jannaschii) protein is Acylphosphatase-like protein MJ1405.